The primary structure comprises 244 residues: tRNA1(Val) (adenine(37)-N6)-methyltransferase (244 aa).

It belongs to the methyltransferase superfamily. tRNA (adenine-N(6)-)-methyltransferase family.

It localises to the cytoplasm. The catalysed reaction is adenosine(37) in tRNA1(Val) + S-adenosyl-L-methionine = N(6)-methyladenosine(37) in tRNA1(Val) + S-adenosyl-L-homocysteine + H(+). Functionally, specifically methylates the adenine in position 37 of tRNA(1)(Val) (anticodon cmo5UAC). The polypeptide is tRNA1(Val) (adenine(37)-N6)-methyltransferase (Shewanella sediminis (strain HAW-EB3)).